Reading from the N-terminus, the 417-residue chain is UDP-N-acetylglucosamine 1-carboxyvinyltransferase (417 aa).

22 to 23 (KN) is a binding site for phosphoenolpyruvate. A UDP-N-acetyl-alpha-D-glucosamine-binding site is contributed by Arg-93. Cys-117 serves as the catalytic Proton donor. Cys-117 carries the 2-(S-cysteinyl)pyruvic acid O-phosphothioketal modification. Residues 122–126 (RPVDL), Asp-305, and Ile-327 each bind UDP-N-acetyl-alpha-D-glucosamine.

It belongs to the EPSP synthase family. MurA subfamily.

It is found in the cytoplasm. It carries out the reaction phosphoenolpyruvate + UDP-N-acetyl-alpha-D-glucosamine = UDP-N-acetyl-3-O-(1-carboxyvinyl)-alpha-D-glucosamine + phosphate. It participates in cell wall biogenesis; peptidoglycan biosynthesis. Cell wall formation. Adds enolpyruvyl to UDP-N-acetylglucosamine. This is UDP-N-acetylglucosamine 1-carboxyvinyltransferase from Thiobacillus denitrificans (strain ATCC 25259 / T1).